The sequence spans 509 residues: Heat shock 70 kDa protein 14 (509 aa).

Belongs to the heat shock protein 70 family. Component of ribosome-associated complex (RAC), a heterodimer composed of Hsp70/DnaK-type chaperone HSPA14 and Hsp40/DnaJ-type chaperone DNAJC2.

The protein localises to the cytoplasm. Its subcellular location is the cytosol. In terms of biological role, component of the ribosome-associated complex (RAC), a complex involved in folding or maintaining nascent polypeptides in a folding-competent state. In the RAC complex, binds to the nascent polypeptide chain, while DNAJC2 stimulates its ATPase activity. This is Heat shock 70 kDa protein 14 (Hspa14) from Mus musculus (Mouse).